A 612-amino-acid chain; its full sequence is MRALLLLGALLVSLESTVSTPPWKGPKKHKLTDSEHTVVLTVTGEPCHFPFQYHRQLHHKCIHRGRPGPRPWCATTPNFEKDQRWAYCLEPKKVKDHCSKHNPCQKGGTCVNMPDGPRCICADHFTGKHCQKEKCFEPQFFRFFHENEIWHRLEPAGVVKCQCKGPNAQCKPLASQVCRTNPCLNGGSCLQAEGHRLCRCAPSFAGRLCDVDLKASCYDDRDRGLSYRGMAGTTLSGAPCQSWASEATYWNVTAEQVLNWGLGDHAFCRASTPPRGYRNPDNDTRPLCFIWKGDRLSWNYCRLAPCQAAAGHEHFPLPSPSALQKPESTTQTPLPSLTSGWCSPTPLASGGPGGCGQRLRKWLSSLNRVVGGLVALPGAHPYIAALYWDQHFCAGSLIAPCWVLTAAHCLQNRPAPKELTVVLGQDRHNQSCEQCQTLAVRDYRLHEAFSPITYQHDLALVRLQESADGCCAHPSPFVQPVCLPSTAARPAESEAAVCEVAGWGHQFEGGEYSSFLQEAQVPLIDPQRCSAPDVHGAAFTQGMLCAGFLEGGTDACQGDSGGPLVCEDETPERQLILRGIVSWGSGCGNRLKPGVYTDVANYLAWIREHTAS.

The first 19 residues, 1 to 19 (MRALLLLGALLVSLESTVS), serve as a signal peptide directing secretion. The Fibronectin type-II domain maps to 42 to 90 (VTGEPCHFPFQYHRQLHHKCIHRGRPGPRPWCATTPNFEKDQRWAYCLE). Disulfide bonds link Cys-47/Cys-73, Cys-61/Cys-88, Cys-98/Cys-110, Cys-104/Cys-119, Cys-121/Cys-130, Cys-135/Cys-163, Cys-161/Cys-170, Cys-178/Cys-189, Cys-183/Cys-198, Cys-200/Cys-209, Cys-217/Cys-306, Cys-240/Cys-288, Cys-268/Cys-301, Cys-355/Cys-482, Cys-393/Cys-409, Cys-401/Cys-471, Cys-432/Cys-435, Cys-498/Cys-566, Cys-529/Cys-545, and Cys-556/Cys-587. The region spanning 94-131 (VKDHCSKHNPCQKGGTCVNMPDGPRCICADHFTGKHCQ) is the EGF-like 1 domain. Thr-109 carries O-linked (Fuc) threonine glycosylation. A Fibronectin type-I domain is found at 133–173 (EKCFEPQFFRFFHENEIWHRLEPAGVVKCQCKGPNAQCKPL). The 37-residue stretch at 174-210 (ASQVCRTNPCLNGGSCLQAEGHRLCRCAPSFAGRLCD) folds into the EGF-like 2 domain. The region spanning 217–306 (CYDDRDRGLS…SWNYCRLAPC (90 aa)) is the Kringle domain. N-linked (GlcNAc...) asparagine glycans are attached at residues Asn-251 and Asn-282. The region spanning 369–611 (VVGGLVALPG…YLAWIREHTA (243 aa)) is the Peptidase S1 domain. His-408 acts as the Charge relay system in catalysis. The N-linked (GlcNAc...) asparagine glycan is linked to Asn-429. Residue Asp-457 is the Charge relay system of the active site. The active-site Charge relay system is the Ser-560.

It belongs to the peptidase S1 family. As to quaternary structure, interacts with HRG; the interaction, which is enhanced in the presence of zinc ions and inhibited by heparin-binding, inhibits factor XII autoactivation and contact-initiated coagulation. Post-translationally, O- and N-glycosylated.

Its subcellular location is the secreted. The enzyme catalyses Selective cleavage of Arg-|-Ile bonds in factor VII to form factor VIIa and factor XI to form factor XIa.. Activity is promoted in the presence of negatively charged surfaces. Its function is as follows. Factor XII is a serum glycoprotein that participates in the initiation of blood coagulation, fibrinolysis, and the generation of bradykinin and angiotensin. Prekallikrein is cleaved by factor XII to form kallikrein, which then cleaves factor XII first to alpha-factor XIIa and then to beta-factor XIIa. Alpha-factor XIIa activates factor XI to factor XIa. In Bos taurus (Bovine), this protein is Coagulation factor XII (F12).